A 139-amino-acid chain; its full sequence is Putative lipoprotein MIP_01412 (139 aa).

A signal peptide spans 1-19 (MRNRTVAAGAVLTAALLGA). The N-palmitoyl cysteine moiety is linked to residue C20. C20 carries S-diacylglycerol cysteine lipidation.

Belongs to the mycobacterial 19 kDa antigen family.

Its subcellular location is the cell membrane. This is Putative lipoprotein MIP_01412 from Mycobacterium indicus pranii (strain DSM 45239 / MTCC 9506).